Consider the following 536-residue polypeptide: Small conductance calcium-activated potassium channel protein 1 (536 aa).

The interval 1–90 is disordered; the sequence is MSSRSHNGSV…KPPTVSHRLG (90 aa). Acidic residues predominate over residues 65 to 75; that stretch reads QEEEEEEEDED. A helical transmembrane segment spans residues 107–127; the sequence is LIFGMFGIVVMVTETELSWGV. A helical membrane pass occupies residues 136–156; sequence FALKCLISLSTVILLGLVILY. A helical membrane pass occupies residues 224 to 244; it reads VLLSIPMFLRLYLLARVMLLH. Residues 273 to 293 traverse the membrane as a helical segment; that stretch reads LMTICPGTVLLVFSISSWIVA. A helical transmembrane segment spans residues 313–333; it reads FLGAMWLISITFLSIGYGDMV. Residues 342–362 constitute an intramembrane region (pore-forming); that stretch reads VCLLTGIMGAGCTALVVAVVA. The calmodulin-binding stretch occupies residues 380 to 459; the sequence is DTQLTKRVKN…LADLAKAQSI (80 aa). A helical membrane pass occupies residues 487–507; sequence VLGASLQALPSLIAQAICPLP. A disordered region spans residues 514–536; that stretch reads SHLTTAAQSPQSHWLPTTASDCG. The segment covering 515-536 has biased composition (polar residues); it reads HLTTAAQSPQSHWLPTTASDCG.

Belongs to the potassium channel KCNN family. KCa2.1/KCNN1 subfamily. As to quaternary structure, homodimer. Heteromultimer with KCNN2 and KCNN3. The complex is composed of 4 channel subunits each of which binds to a calmodulin subunit which regulates the channel activity through calcium-binding. Interacts with calmodulin. In terms of tissue distribution, widely expressed including brain.

The protein resides in the membrane. Its subcellular location is the cytoplasm. It localises to the myofibril. It is found in the sarcomere. The protein localises to the z line. It carries out the reaction K(+)(in) = K(+)(out). Its activity is regulated as follows. Inhibited by bee venom neurotoxin apamin. Inhibited by d-tubocurarine and tetraethylammonium (TEA). In terms of biological role, small conductance calcium-activated potassium channel that mediates the voltage-independent transmembrane transfer of potassium across the cell membrane through a constitutive interaction with calmodulin which binds the intracellular calcium allowing its opening. The current is characterized by a voltage-independent activation, an intracellular calcium concentration increase-dependent activation and a single-channel conductance of about 3 picosiemens. Also presents an inwardly rectifying current, thus reducing its already small outward conductance of potassium ions, which is particularly the case when the membrane potential displays positive values, above + 20 mV. Activation is followed by membrane hyperpolarization. Thought to regulate neuronal excitability by contributing to the slow component of synaptic afterhyperpolarization. The chain is Small conductance calcium-activated potassium channel protein 1 from Rattus norvegicus (Rat).